Consider the following 293-residue polypeptide: Pyridoxal 5'-phosphate synthase subunit PdxS (293 aa).

D-ribose 5-phosphate is bound at residue aspartate 23. The active-site Schiff-base intermediate with D-ribose 5-phosphate is the lysine 80. Residue glycine 152 participates in D-ribose 5-phosphate binding. Residue arginine 164 coordinates D-glyceraldehyde 3-phosphate. Residues glycine 213 and glycine 234 to serine 235 each bind D-ribose 5-phosphate.

Belongs to the PdxS/SNZ family. As to quaternary structure, in the presence of PdxT, forms a dodecamer of heterodimers.

It carries out the reaction aldehydo-D-ribose 5-phosphate + D-glyceraldehyde 3-phosphate + L-glutamine = pyridoxal 5'-phosphate + L-glutamate + phosphate + 3 H2O + H(+). Its pathway is cofactor biosynthesis; pyridoxal 5'-phosphate biosynthesis. Its function is as follows. Catalyzes the formation of pyridoxal 5'-phosphate from ribose 5-phosphate (RBP), glyceraldehyde 3-phosphate (G3P) and ammonia. The ammonia is provided by the PdxT subunit. Can also use ribulose 5-phosphate and dihydroxyacetone phosphate as substrates, resulting from enzyme-catalyzed isomerization of RBP and G3P, respectively. The chain is Pyridoxal 5'-phosphate synthase subunit PdxS from Dehalococcoides mccartyi (strain ATCC BAA-2100 / JCM 16839 / KCTC 5957 / BAV1).